A 189-amino-acid polypeptide reads, in one-letter code: UPF0312 protein VIBHAR_05924 (189 aa).

The first 22 residues, 1-22 (MKKSLFATGLAIAIALPFGANA), serve as a signal peptide directing secretion.

The protein belongs to the UPF0312 family. Type 1 subfamily.

It is found in the periplasm. This Vibrio campbellii (strain ATCC BAA-1116) protein is UPF0312 protein VIBHAR_05924.